We begin with the raw amino-acid sequence, 37 residues long: Large ribosomal subunit protein bL36 (37 aa).

The protein belongs to the bacterial ribosomal protein bL36 family.

The polypeptide is Large ribosomal subunit protein bL36 (Variovorax paradoxus (strain S110)).